The chain runs to 119 residues: Ribonuclease P protein component (119 aa).

Belongs to the RnpA family. In terms of assembly, consists of a catalytic RNA component (M1 or rnpB) and a protein subunit.

The enzyme catalyses Endonucleolytic cleavage of RNA, removing 5'-extranucleotides from tRNA precursor.. Functionally, RNaseP catalyzes the removal of the 5'-leader sequence from pre-tRNA to produce the mature 5'-terminus. It can also cleave other RNA substrates such as 4.5S RNA. The protein component plays an auxiliary but essential role in vivo by binding to the 5'-leader sequence and broadening the substrate specificity of the ribozyme. The sequence is that of Ribonuclease P protein component from Cronobacter sakazakii (strain ATCC BAA-894) (Enterobacter sakazakii).